The following is a 341-amino-acid chain: N-acetyl-gamma-glutamyl-phosphate reductase (341 aa).

Residue Cys147 is part of the active site.

The protein belongs to the NAGSA dehydrogenase family. Type 1 subfamily.

Its subcellular location is the cytoplasm. The catalysed reaction is N-acetyl-L-glutamate 5-semialdehyde + phosphate + NADP(+) = N-acetyl-L-glutamyl 5-phosphate + NADPH + H(+). The protein operates within amino-acid biosynthesis; L-arginine biosynthesis; N(2)-acetyl-L-ornithine from L-glutamate: step 3/4. Functionally, catalyzes the NADPH-dependent reduction of N-acetyl-5-glutamyl phosphate to yield N-acetyl-L-glutamate 5-semialdehyde. This chain is N-acetyl-gamma-glutamyl-phosphate reductase, found in Dehalococcoides mccartyi (strain ATCC BAA-2266 / KCTC 15142 / 195) (Dehalococcoides ethenogenes (strain 195)).